A 79-amino-acid chain; its full sequence is CDC42 small effector protein 1 (79 aa).

Residues cysteine 10 and cysteine 11 are each lipidated (S-palmitoyl cysteine). A CRIB domain is found at isoleucine 30–glycine 43. The segment at glycine 48–leucine 79 is disordered. A compositionally biased stretch (basic and acidic residues) spans methionine 63–proline 72.

Belongs to the CDC42SE/SPEC family. Interacts with CDC42 (in GTP-bound form). Interacts weakly with RAC1 and not at all with RHOA.

The protein localises to the cytoplasm. It localises to the cytoskeleton. Its subcellular location is the cell membrane. Probably involved in the organization of the actin cytoskeleton by acting downstream of CDC42, inducing actin filament assembly. Alters CDC42-induced cell shape changes. In activated T-cells, may play a role in CDC42-mediated F-actin accumulation at the immunological synapse. May play a role in early contractile events in phagocytosis in macrophages. The protein is CDC42 small effector protein 1 (CDC42SE1) of Pongo abelii (Sumatran orangutan).